We begin with the raw amino-acid sequence, 393 residues long: Glycocyamine kinase (393 aa).

The Phosphagen kinase N-terminal domain occupies 7–94 (REKFAKENFP…FDRVIEEIHH (88 aa)). The region spanning 120-362 (YVKSCRIRCG…NVLIEADKRL (243 aa)) is the Phosphagen kinase C-terminal domain. ATP contacts are provided by residues 123 to 127 (SCRIR), H186, R231, 287 to 291 (RASVH), 315 to 320 (RGTGGE), and D330. The tract at residues 367 to 393 (PIDDLTPRLNSSTGTSISATASRHMTL) is disordered. Residues 377-393 (SSTGTSISATASRHMTL) are compositionally biased toward low complexity.

This sequence belongs to the ATP:guanido phosphotransferase family. Monomer.

It carries out the reaction guanidinoacetate + ATP = phosphoguanidinoacetate + ADP + H(+). The polypeptide is Glycocyamine kinase (Hediste diversicolor (Sandworm)).